The primary structure comprises 342 residues: Prenyl transferase ptmC (342 aa).

The chain crosses the membrane as a helical span at residues 17 to 37 (LSFLTLTVGALALIVVLYISI). Histidine 110 contacts isopentenyl diphosphate. Aspartate 117 and aspartate 121 together coordinate Mg(2+). Arginine 126 lines the dimethylallyl diphosphate pocket. A glycan (N-linked (GlcNAc...) asparagine) is linked at asparagine 154. Lysine 210, threonine 211, glutamine 240, asparagine 247, and lysine 257 together coordinate dimethylallyl diphosphate.

It belongs to the FPP/GGPP synthase family.

The protein resides in the membrane. Its pathway is secondary metabolite biosynthesis. Functionally, prenyl transferase; part of the gene cluster that mediates the biosynthesis of the indole diterpenes penitrems. The geranylgeranyl diphosphate (GGPP) synthase ptmG catalyzes the first step in penitrem biosynthesis via conversion of farnesyl pyrophosphate and isopentyl pyrophosphate into geranylgeranyl pyrophosphate (GGPP). Condensation of indole-3-glycerol phosphate with GGPP by the prenyl transferase ptmC then forms 3-geranylgeranylindole (3-GGI). Epoxidation by the FAD-dependent monooxygenase ptmM leads to a epoxidized-GGI that is substrate of the terpene cyclase ptmB for cyclization to yield paspaline. Paspaline is subsequently converted to 13-desoxypaxilline by the cytochrome P450 monooxygenase ptmP, the latter being then converted to paxilline by the cytochrome P450 monooxygenase ptmQ. Paxilline is converted to beta-paxitriol via C-10 ketoreduction by the short-chain dehydrogenase ptmH which can be monoprenylated at the C-20 by the indole diterpene prenyltransferase ptmD. A two-step elimination (acetylation and elimination) process performed by the O-acetyltransferase ptmV and ptmI leads to the production of the prenylated form of penijanthine. The FAD-linked oxidoreductase ptmO then converts the prenylated form of penijanthine into PC-M5 which is in turn transformed into PC-M4 by the aromatic dimethylallyltransferase ptmE. Five sequential oxidative transformations performed by the cytochrome P450 monooxygenases ptmK, ptmU, ptmL, ptmN and ptmJ yield the various penitrem compounds. PtmK, ptmU and ptmM are involved in the formation of the key bicyclic ring of penitrem C via the formation of the intermediates secopenitrem D and penitrem D. PtmL catalyzes the epoxidation of penitrem D and C to yield penitrem B and F, respectively. PtmJ catalyzes the last benzylic hydroxylation to convert penitrem B to prenitrem E and penitrem F to penitrem A. This Penicillium ochrochloron protein is Prenyl transferase ptmC.